Reading from the N-terminus, the 299-residue chain is N-acetylmuramic acid 6-phosphate etherase (299 aa).

The SIS domain maps to 57–220 (ISAAFHKKGR…TTGAMIRTGK (164 aa)). E85 (proton donor) is an active-site residue. E116 is an active-site residue.

Belongs to the GCKR-like family. MurNAc-6-P etherase subfamily. In terms of assembly, homodimer.

The catalysed reaction is N-acetyl-D-muramate 6-phosphate + H2O = N-acetyl-D-glucosamine 6-phosphate + (R)-lactate. Its pathway is amino-sugar metabolism; 1,6-anhydro-N-acetylmuramate degradation. The protein operates within amino-sugar metabolism; N-acetylmuramate degradation. It functions in the pathway cell wall biogenesis; peptidoglycan recycling. Specifically catalyzes the cleavage of the D-lactyl ether substituent of MurNAc 6-phosphate, producing GlcNAc 6-phosphate and D-lactate. Together with AnmK, is also required for the utilization of anhydro-N-acetylmuramic acid (anhMurNAc) either imported from the medium or derived from its own cell wall murein, and thus plays a role in cell wall recycling. This Psychromonas ingrahamii (strain DSM 17664 / CCUG 51855 / 37) protein is N-acetylmuramic acid 6-phosphate etherase.